A 134-amino-acid polypeptide reads, in one-letter code: Retinol-binding protein 2 (134 aa).

All-trans-retinol is bound by residues Lys-41 and Gln-109.

It belongs to the calycin superfamily. Fatty-acid binding protein (FABP) family. In terms of tissue distribution, higher expression in adult small intestine and to a much lesser extent in fetal kidney.

Its subcellular location is the cytoplasm. Intracellular transport of retinol. In Homo sapiens (Human), this protein is Retinol-binding protein 2 (RBP2).